The following is a 251-amino-acid chain: 1-(5-phosphoribosyl)-5-[(5-phosphoribosylamino)methylideneamino] imidazole-4-carboxamide isomerase (251 aa).

The active-site Proton acceptor is the D8. The active-site Proton donor is D131.

It belongs to the HisA/HisF family.

Its subcellular location is the cytoplasm. It carries out the reaction 1-(5-phospho-beta-D-ribosyl)-5-[(5-phospho-beta-D-ribosylamino)methylideneamino]imidazole-4-carboxamide = 5-[(5-phospho-1-deoxy-D-ribulos-1-ylimino)methylamino]-1-(5-phospho-beta-D-ribosyl)imidazole-4-carboxamide. It participates in amino-acid biosynthesis; L-histidine biosynthesis; L-histidine from 5-phospho-alpha-D-ribose 1-diphosphate: step 4/9. This is 1-(5-phosphoribosyl)-5-[(5-phosphoribosylamino)methylideneamino] imidazole-4-carboxamide isomerase from Azoarcus sp. (strain BH72).